The following is a 394-amino-acid chain: NADH dehydrogenase [ubiquinone] iron-sulfur protein 2 (394 aa).

The protein belongs to the complex I 49 kDa subunit family. As to quaternary structure, complex I is composed of at least 49 different subunits. This is a component of the iron-sulfur (IP) fragment of the enzyme.

The protein resides in the mitochondrion. It carries out the reaction a ubiquinone + NADH + 5 H(+)(in) = a ubiquinol + NAD(+) + 4 H(+)(out). In terms of biological role, core subunit of the mitochondrial membrane respiratory chain NADH dehydrogenase (Complex I) that is believed to belong to the minimal assembly required for catalysis. Complex I functions in the transfer of electrons from NADH to the respiratory chain. The immediate electron acceptor for the enzyme is believed to be ubiquinone. Component of the iron-sulfur (IP) fragment of the enzyme. The chain is NADH dehydrogenase [ubiquinone] iron-sulfur protein 2 (NAD7) from Arabidopsis thaliana (Mouse-ear cress).